The sequence spans 244 residues: 23S rRNA (guanosine-2'-O-)-methyltransferase RlmB (244 aa).

S-adenosyl-L-methionine contacts are provided by Gly-196, Ile-216, and Leu-225.

This sequence belongs to the class IV-like SAM-binding methyltransferase superfamily. RNA methyltransferase TrmH family. RlmB subfamily. In terms of assembly, homodimer.

It is found in the cytoplasm. The enzyme catalyses guanosine(2251) in 23S rRNA + S-adenosyl-L-methionine = 2'-O-methylguanosine(2251) in 23S rRNA + S-adenosyl-L-homocysteine + H(+). Specifically methylates the ribose of guanosine 2251 in 23S rRNA. The sequence is that of 23S rRNA (guanosine-2'-O-)-methyltransferase RlmB from Pectobacterium atrosepticum (strain SCRI 1043 / ATCC BAA-672) (Erwinia carotovora subsp. atroseptica).